Reading from the N-terminus, the 666-residue chain is UvrABC system protein B (666 aa).

The region spanning 25 to 412 is the Helicase ATP-binding domain; it reads EQVQAGAPYQ…EEQIVEQVIR (388 aa). 38 to 45 lines the ATP pocket; the sequence is GATGTGKT. A Beta-hairpin motif is present at residues 91–114; sequence YYDYYQPEAYIPVTDTYIAKTASI. The Helicase C-terminal domain maps to 429 to 595; sequence QVDDLLAEIQ…PIIKRSSNAI (167 aa). The region spanning 626–661 is the UVR domain; it reads PNLITQLEAQMKEAAKNLEFEEAAQYRDRIKKLRER.

This sequence belongs to the UvrB family. As to quaternary structure, forms a heterotetramer with UvrA during the search for lesions. Interacts with UvrC in an incision complex.

The protein resides in the cytoplasm. Functionally, the UvrABC repair system catalyzes the recognition and processing of DNA lesions. A damage recognition complex composed of 2 UvrA and 2 UvrB subunits scans DNA for abnormalities. Upon binding of the UvrA(2)B(2) complex to a putative damaged site, the DNA wraps around one UvrB monomer. DNA wrap is dependent on ATP binding by UvrB and probably causes local melting of the DNA helix, facilitating insertion of UvrB beta-hairpin between the DNA strands. Then UvrB probes one DNA strand for the presence of a lesion. If a lesion is found the UvrA subunits dissociate and the UvrB-DNA preincision complex is formed. This complex is subsequently bound by UvrC and the second UvrB is released. If no lesion is found, the DNA wraps around the other UvrB subunit that will check the other stand for damage. The protein is UvrABC system protein B of Synechococcus sp. (strain ATCC 27144 / PCC 6301 / SAUG 1402/1) (Anacystis nidulans).